Here is a 568-residue protein sequence, read N- to C-terminus: Urease subunit alpha (568 aa).

Residues 130–568 (GGIDTHIHFI…LPMAQRYFLF (439 aa)) form the Urease domain. Positions 135, 137, and 218 each coordinate Ni(2+). N6-carboxylysine is present on lysine 218. Histidine 220 is a binding site for substrate. Positions 247 and 273 each coordinate Ni(2+). The Proton donor role is filled by histidine 321. Aspartate 361 serves as a coordination point for Ni(2+).

This sequence belongs to the metallo-dependent hydrolases superfamily. Urease alpha subunit family. As to quaternary structure, heterotrimer of UreA (gamma), UreB (beta) and UreC (alpha) subunits. Three heterotrimers associate to form the active enzyme. Ni cation serves as cofactor. Post-translationally, carboxylation allows a single lysine to coordinate two nickel ions.

It localises to the cytoplasm. The enzyme catalyses urea + 2 H2O + H(+) = hydrogencarbonate + 2 NH4(+). Its pathway is nitrogen metabolism; urea degradation; CO(2) and NH(3) from urea (urease route): step 1/1. The protein is Urease subunit alpha of Burkholderia orbicola (strain MC0-3).